The sequence spans 787 residues: PAN2-PAN3 deadenylation complex subunit pan3 (787 aa).

The segment at 1–20 is disordered; it reads MNSGLTPSPSPAVAAAGPAG. The span at 11 to 20 shows a compositional bias: low complexity; sequence PAVAAAGPAG. The segment at 23–51 adopts a C3H1-type zinc-finger fold; it reads GSKLKFCRYYAKDRTCFYGDECQFLHDDQ. Disordered stretches follow at residues 131 to 162, 179 to 210, and 226 to 291; these read EATY…AAHD, TMSQ…MSQS, and GGPT…PPST. 2 stretches are compositionally biased toward low complexity: residues 143 to 154 and 200 to 210; these read NSSSSPSLLNDS and STSRLSNMSQS. A PABPC-interacting motif-2 (PAM-2) motif is present at residues 185 to 200; the sequence is KTPNPTASEFIPKGGS. A compositionally biased stretch (polar residues) spans 265–290; the sequence is TPNPANYMVPTSASTPVTNSVSQPPS. The pseudokinase domain stretch occupies residues 365–650; that stretch reads QIDQADMPGV…SVNDIMPMIG (286 aa). Residues arginine 422, 471-478, and 545-546 contribute to the ATP site; these read DFHAGSET and TK. A coiled-coil region spans residues 651 to 689; sequence ARFYTQLDAAQMRNDVIEEDLAKEVQNGRLFRLLAKLGT. A knob domain region spans residues 690–787; sequence INERPEFQKD…ELVAAANGQL (98 aa).

The protein belongs to the protein kinase superfamily. PAN3 family. In terms of assembly, homodimer. Forms a heterotrimer with a catalytic subunit pan2 to form the poly(A)-nuclease (PAN) deadenylation complex. Interacts (via PAM-2 motif) with poly(A)-binding protein pabpc1 (via PABC domain), conferring substrate specificity of the enzyme complex. Interacts with the GW182 family proteins tnrc6a, tnrc6b and tnrc6c.

Its subcellular location is the cytoplasm. It is found in the P-body. Regulatory subunit of the poly(A)-nuclease (PAN) deadenylation complex, one of two cytoplasmic mRNA deadenylases involved in general and miRNA-mediated mRNA turnover. PAN specifically shortens poly(A) tails of RNA and the activity is stimulated by poly(A)-binding protein (PABP). PAN deadenylation is followed by rapid degradation of the shortened mRNA tails by the CCR4-NOT complex. Deadenylated mRNAs are then degraded by two alternative mechanisms, namely exosome-mediated 3'-5' exonucleolytic degradation, or deadenylation-dependent mRNA decaping and subsequent 5'-3' exonucleolytic degradation by XRN1. PAN3 acts as a positive regulator for PAN activity, recruiting the catalytic subunit PAN2 to mRNA via its interaction with RNA and PABP, and to miRNA targets via its interaction with GW182 family proteins. The protein is PAN2-PAN3 deadenylation complex subunit pan3 of Xenopus tropicalis (Western clawed frog).